Reading from the N-terminus, the 520-residue chain is Interferon lambda receptor 1 (520 aa).

The first 20 residues, 1–20 (MAGPERWGPLLLCLLQAAPG), serve as a signal peptide directing secretion. Residues 21 to 228 (RPRLAPPQNV…LLEVPEANWA (208 aa)) lie on the Extracellular side of the membrane. Residues 26-126 (PPQNVTLLSQ…LDYLFEVEPA (101 aa)) enclose the Fibronectin type-III domain. Residues Asn29 and Asn36 are each glycosylated (N-linked (GlcNAc...) asparagine). 2 disulfides stabilise this stretch: Cys74-Cys82 and Cys86-Cys150. N-linked (GlcNAc...) asparagine glycosylation is found at Asn142 and Asn169. Cys195 and Cys217 are disulfide-bonded. A helical transmembrane segment spans residues 229 to 249 (FLVLPSLLILLLVIAAGGVIW). Topologically, residues 250–520 (KTLMGNPWFQ…GRTLGHYMAR (271 aa)) are cytoplasmic. Disordered stretches follow at residues 302 to 439 (VRPT…FLEE) and 477 to 520 (ESSP…YMAR). The segment covering 323-336 (AEDEEEEDEEDTED) has biased composition (acidic residues). The segment covering 380-392 (SSAWDSSDRSWAS) has biased composition (low complexity). The segment covering 479 to 495 (SPEEEEEARESEIEDSD) has biased composition (acidic residues).

It belongs to the type II cytokine receptor family. As to quaternary structure, heterodimer with IL10RB. Post-translationally, ubiquitinated by FBXO45-containing E3 ligase leading to proteasomal degradation. In terms of tissue distribution, widely expressed.

Its subcellular location is the membrane. Functionally, the IFNLR1/IL10RB dimer is a receptor for the cytokine ligands IFNL2 and IFNL3 and mediates their antiviral activity. The ligand/receptor complex stimulate the activation of the JAK/STAT signaling pathway leading to the expression of IFN-stimulated genes (ISG), which contribute to the antiviral state. Determines the cell type specificity of the lambda interferon action. Shows a more restricted pattern of expression in the epithelial tissues thereby limiting responses to lambda interferons primarily to epithelial cells of the respiratory, gastrointestinal, and reproductive tracts. Seems not to be essential for early virus-activated host defense in vaginal infection, but plays an important role in Toll-like receptor (TLR)-induced antiviral defense. Plays a significant role in the antiviral immune defense in the intestinal epithelium. The polypeptide is Interferon lambda receptor 1 (IFNLR1) (Homo sapiens (Human)).